The following is a 153-amino-acid chain: Large ribosomal subunit protein uL15 (153 aa).

Residues 1-42 (MRLNTIKPGMGSTKPRRRVGRGIGSGLGKTCGRGHKGQKSRA) are disordered. The segment covering 21–31 (RGIGSGLGKTC) has biased composition (gly residues).

The protein belongs to the universal ribosomal protein uL15 family. In terms of assembly, part of the 50S ribosomal subunit.

Its function is as follows. Binds to the 23S rRNA. The polypeptide is Large ribosomal subunit protein uL15 (Nitrosomonas eutropha (strain DSM 101675 / C91 / Nm57)).